The following is a 419-amino-acid chain: Serine/threonine-protein kinase Kist (419 aa).

The 282-residue stretch at 23-304 (WQVQSRLGSG…AEMALCSPFF (282 aa)) folds into the Protein kinase domain. Residues 29–37 (LGSGSSASV) and Lys54 each bind ATP. Catalysis depends on proton acceptor residues Asp141 and Asp158. An RRM domain is found at 324-406 (RLLNVLDDDY…KFVVATFYPL (83 aa)).

It belongs to the protein kinase superfamily. Ser/Thr protein kinase family. In terms of assembly, interacts with stathmin and CDKN1B/p27Kip1 Interacts with PAM. As to expression, in the embryo, preferentially expressed in the developing nervous system.

The protein localises to the cytoplasm. The protein resides in the nucleus. The enzyme catalyses L-seryl-[protein] + ATP = O-phospho-L-seryl-[protein] + ADP + H(+). It catalyses the reaction L-threonyl-[protein] + ATP = O-phospho-L-threonyl-[protein] + ADP + H(+). Functionally, upon serum stimulation, phosphorylates CDKN1B/p27Kip1, thus controlling CDKN1B subcellular location and cell cycle progression in G1 phase. May be involved in trafficking and/or processing of RNA. This Rattus norvegicus (Rat) protein is Serine/threonine-protein kinase Kist (Uhmk1).